The primary structure comprises 558 residues: MLYNKYVKYPKVKLDNREWPDKQIEKAPIWCSVDLRDGNQALPKPMNVDEKIKMFKMLVDIGFKEIEIGFPSASETEYEFTRKLIEDKLIPEDVTIQVLTQAREHLVKKTFEALKGVKTAIVHVYNSTSELQRRVVFKKDKDEVKSLAIKGAQMVKKYSEYTEYSESKFVFEYSPESFTGTELDYALEVCEAVLNVWKPSKENKAIINLPSTVEMATPNIYADQIEWFCKKLLNRESVILSLHTHNDRGTCTASSELGILAGADRVEGTLFGNGERTGNLDIMNMALNMYSQGVDPELEFSNLNDIVEAYEECTKMVVHERHPYAGKLVFTAFSGSHQDAIRKGLKSLKEGKNKHWEVPYLAVDPHDLGREYEEIIRINSQSGKGGTAYIMESDFGFILPKAMHPEFGKVIKKKSDELDCELSPEQIFKFFKEEYLENRSPYYLKNYKIHSIQNIEEEKNTVDIEAVISVNGKDTSIEGVGNGPVDAFFNAMNNKKYNGCKFISYDEHALNIGSHSKAVAYVQIESQDKKYFGVGISDNIDTASINAIVSALNRSKLK.

One can recognise a Pyruvate carboxyltransferase domain in the interval 28–304 (PIWCSVDLRD…DPELEFSNLN (277 aa)). Mg(2+) is bound by residues D37, H243, H245, and N279. Positions 438 to 558 (NRSPYYLKNY…VSALNRSKLK (121 aa)) are regulatory domain.

The protein belongs to the alpha-IPM synthase/homocitrate synthase family. LeuA type 2 subfamily. In terms of assembly, homodimer. It depends on Mg(2+) as a cofactor.

The protein resides in the cytoplasm. The enzyme catalyses 3-methyl-2-oxobutanoate + acetyl-CoA + H2O = (2S)-2-isopropylmalate + CoA + H(+). It participates in amino-acid biosynthesis; L-leucine biosynthesis; L-leucine from 3-methyl-2-oxobutanoate: step 1/4. In terms of biological role, catalyzes the condensation of the acetyl group of acetyl-CoA with 3-methyl-2-oxobutanoate (2-ketoisovalerate) to form 3-carboxy-3-hydroxy-4-methylpentanoate (2-isopropylmalate). This is 2-isopropylmalate synthase from Clostridium acetobutylicum (strain ATCC 824 / DSM 792 / JCM 1419 / IAM 19013 / LMG 5710 / NBRC 13948 / NRRL B-527 / VKM B-1787 / 2291 / W).